Here is a 627-residue protein sequence, read N- to C-terminus: BURP domain-containing protein 12 (627 aa).

A signal peptide spans 1–25; it reads MASPPHLPLLLLLLVVVCNAAGGDG. Asn119, Asn175, Asn251, Asn366, Asn384, and Asn530 each carry an N-linked (GlcNAc...) asparagine glycan. The 212-residue stretch at 415-626 folds into the BURP domain; that stretch reads FFRETELVSG…FEGDMTWTVA (212 aa).

In terms of tissue distribution, expressed in stems, leaves, shoot and panicles.

The protein is BURP domain-containing protein 12 (BURP12) of Oryza sativa subsp. japonica (Rice).